A 71-amino-acid polypeptide reads, in one-letter code: Pro-MCH (71 aa).

The first 20 residues, 1 to 20, serve as a signal peptide directing secretion; the sequence is AKMSLSSYILILTLVLFSQG.

It belongs to the melanin-concentrating hormone family.

It is found in the secreted. The sequence is that of Pro-MCH (PMCH) from Carlito syrichta (Philippine tarsier).